Consider the following 365-residue polypeptide: Histidinol-phosphate aminotransferase (365 aa).

Position 220 is an N6-(pyridoxal phosphate)lysine (Lys-220).

It belongs to the class-II pyridoxal-phosphate-dependent aminotransferase family. Histidinol-phosphate aminotransferase subfamily. As to quaternary structure, homodimer. Pyridoxal 5'-phosphate serves as cofactor.

It catalyses the reaction L-histidinol phosphate + 2-oxoglutarate = 3-(imidazol-4-yl)-2-oxopropyl phosphate + L-glutamate. Its pathway is amino-acid biosynthesis; L-histidine biosynthesis; L-histidine from 5-phospho-alpha-D-ribose 1-diphosphate: step 7/9. The sequence is that of Histidinol-phosphate aminotransferase from Xylella fastidiosa (strain 9a5c).